The chain runs to 800 residues: Structural protein ORF800 (800 aa).

Coiled-coil stretches lie at residues 98 to 130 (AENI…YNLA), 447 to 475 (LLAE…ANNL), 514 to 567 (AINQ…ANNL), and 606 to 633 (AINQ…NLLA). The tract at residues 759 to 800 (AESIAESESETTESENNETTESTANSEGEKQEGEHGARLIRV) is disordered. Positions 761–776 (SIAESESETTESENNE) are enriched in acidic residues. Residues 785–800 (EGEKQEGEHGARLIRV) are compositionally biased toward basic and acidic residues.

It is found in the virion. In Acidianus convivator (ATV), this protein is Structural protein ORF800.